A 262-amino-acid chain; its full sequence is uncharacterized protein (262 aa).

An ABC transporter domain is found at 5 to 223; it reads IKVENLTKYF…MAYIEYLDNG (219 aa). 37 to 44 lines the ATP pocket; it reads GHNGAGKT.

Belongs to the ABC transporter superfamily.

This is an uncharacterized protein from Methanocaldococcus jannaschii (strain ATCC 43067 / DSM 2661 / JAL-1 / JCM 10045 / NBRC 100440) (Methanococcus jannaschii).